A 394-amino-acid polypeptide reads, in one-letter code: A-type flagellin (394 aa).

The protein belongs to the bacterial flagellin family. Post-translationally, phosphorylated on tyrosine residue(s). In terms of processing, flagellin from strain 5939 but not from strain 170018 is glycosylated.

Its subcellular location is the secreted. The protein localises to the bacterial flagellum. In terms of biological role, flagellin is the subunit protein which polymerizes to form the filaments of bacterial flagella. The sequence is that of A-type flagellin (fliC) from Pseudomonas aeruginosa.